A 50-amino-acid polypeptide reads, in one-letter code: Sperm protamine P1 (50 aa).

2 disulfide bridges follow: cysteine 7/cysteine 15 and cysteine 39/cysteine 47.

It belongs to the protamine P1 family. As to quaternary structure, cross-linked by interchain disulfide bonds around the DNA-helix. Testis.

The protein localises to the nucleus. The protein resides in the chromosome. Protamines substitute for histones in the chromatin of sperm during the haploid phase of spermatogenesis. They compact sperm DNA into a highly condensed, stable and inactive complex. The sequence is that of Sperm protamine P1 (PRM1) from Sus scrofa (Pig).